A 1095-amino-acid polypeptide reads, in one-letter code: Collagen, type I, alpha 1a (1095 aa).

The span at 1–21 (SPAMPVPGPMGPMGPRGPPGS) shows a compositional bias: pro residues. A disordered region spans residues 1–1011 (SPAMPVPGPM…QPQEKAPDPY (1011 aa)). Residues 22–49 (PGASGPQGFTGPPGEPGEAGSAGAMGPR) are compositionally biased toward low complexity. Residues 58–72 (NGEDGESGKPGRGGE) show a composition bias toward basic and acidic residues. Low complexity predominate over residues 127-145 (TGAAGAAGARGNDGAAGAA). The segment covering 147-160 (PPGPTGPAGPPGFP) has biased composition (pro residues). Residues 161-179 (GGPGAKGDAGAQGGRGPEG) show a composition bias toward gly residues. 3 stretches are compositionally biased toward low complexity: residues 180-223 (PAGA…AGAP), 232-270 (SGPQ…APGV), and 288-297 (EPGAAGARGA). Positions 299-311 (GERGGPGGRGFPG) are enriched in gly residues. Composition is skewed to low complexity over residues 385–400 (VGAR…PGPK), 477–489 (LPGE…PAGA), 498–544 (ERGA…QGMP), and 577–592 (RGLT…AGAT). The segment covering 602-611 (GPVGPGGARG) has biased composition (gly residues). Composition is skewed to low complexity over residues 625 to 661 (AGFA…AGPT) and 675 to 697 (PKGA…AGRV). Over residues 699-712 (PPGPSGNPGPPGPA) the composition is skewed to pro residues. The segment covering 804 to 822 (PGLAGAPGEPGREGSPGNE) has biased composition (low complexity). The span at 848 to 858 (APGPPGAPGPV) shows a compositional bias: pro residues. Residues 872–893 (PAGPAGSAGPAGPRGPAGALGL) are compositionally biased toward low complexity. Basic and acidic residues predominate over residues 894-908 (RGDKGESGEAGERGM). Residues 924–960 (AGSSGEQGPAGAAGPAGPRGPAGSAGSPGKDGMSGLP) show a composition bias toward low complexity. The segment covering 976–988 (AGPPGPPGPPGAP) has biased composition (pro residues). A Fibrillar collagen NC1 domain is found at 1062 to 1095 (TGTWGKLPLLDLAPMDVGAPDQEFGLEVGPVCFL).

This sequence belongs to the fibrillar collagen family.

It localises to the secreted. The protein localises to the extracellular space. It is found in the extracellular matrix. This is Collagen, type I, alpha 1a from Epinephelus caninus (Dogtooth grouper).